The sequence spans 203 residues: Small ribosomal subunit protein uS7 (203 aa).

A disordered region spans residues 1–22 (MSESEAPEPDQPAGAEEATGAK).

This sequence belongs to the universal ribosomal protein uS7 family. Part of the 30S ribosomal subunit.

In terms of biological role, one of the primary rRNA binding proteins, it binds directly to 16S rRNA where it nucleates assembly of the head domain of the 30S subunit. Is located at the subunit interface close to the decoding center. The sequence is that of Small ribosomal subunit protein uS7 from Halococcus morrhuae (Micrococcus morrhuae).